Here is a 2430-residue protein sequence, read N- to C-terminus: Spatacsin (2430 aa).

Phosphoserine is present on residues Ser1942 and Ser1943.

As to quaternary structure, interacts with AP5Z1, AP5B1, AP5S1 and ZFYVE26. Ubiquitously expressed at low level. Expressed in embryonic and adult cortical projection neurons.

The protein localises to the cytoplasm. Its subcellular location is the cytosol. It localises to the nucleus. The protein resides in the cell projection. It is found in the axon. The protein localises to the dendrite. Its subcellular location is the synapse. May play a role in neurite plasticity by maintaining cytoskeleton stability and regulating synaptic vesicle transport. In Mus musculus (Mouse), this protein is Spatacsin (Spg11).